A 159-amino-acid chain; its full sequence is Ribosome maturation factor RimP (159 aa).

The protein belongs to the RimP family.

Its subcellular location is the cytoplasm. In terms of biological role, required for maturation of 30S ribosomal subunits. This Geotalea daltonii (strain DSM 22248 / JCM 15807 / FRC-32) (Geobacter daltonii) protein is Ribosome maturation factor RimP.